The primary structure comprises 398 residues: Autophagy protein 5 (398 aa).

The tract at residues 99–147 is disordered; it reads NSNNNNNNNNNNNNNNNNNNNNNNNNNNNNNNNNNNNNNNNNNNNNNNN. A Glycyl lysine isopeptide (Lys-Gly) (interchain with G-Cter in ATG12) cross-link involves residue lysine 187. A disordered region spans residues 292-321; sequence NNNNINNNSPPLSPNSNNNNNNNNVDNSIE.

This sequence belongs to the ATG5 family. Post-translationally, conjugated to atg12; which is essential for autophagy.

The protein resides in the cytoplasm. The protein localises to the preautophagosomal structure membrane. Functionally, involved in autophagic vesicle formation. Conjugation with atg12, through a ubiquitin-like conjugating system involving atg7 as an E1-like activating enzyme and atg10 as an E2-like conjugating enzyme, is essential for its function. The atg12-atg5 conjugate acts as an E3-like enzyme which is required for lipidation of atg8 and its association to the vesicle membranes. The sequence is that of Autophagy protein 5 (atg5) from Dictyostelium discoideum (Social amoeba).